We begin with the raw amino-acid sequence, 291 residues long: ATP synthase gamma chain (291 aa).

This sequence belongs to the ATPase gamma chain family. F-type ATPases have 2 components, CF(1) - the catalytic core - and CF(0) - the membrane proton channel. CF(1) has five subunits: alpha(3), beta(3), gamma(1), delta(1), epsilon(1). CF(0) has three main subunits: a, b and c.

It localises to the cell inner membrane. Its function is as follows. Produces ATP from ADP in the presence of a proton gradient across the membrane. The gamma chain is believed to be important in regulating ATPase activity and the flow of protons through the CF(0) complex. The protein is ATP synthase gamma chain of Neisseria meningitidis serogroup C / serotype 2a (strain ATCC 700532 / DSM 15464 / FAM18).